The primary structure comprises 462 residues: Alanine racemase (462 aa).

The Proton acceptor; specific for D-alanine role is filled by Lys34. At Lys34 the chain carries N6-(pyridoxal phosphate)lysine. Residues 73–132 (ASWHESVFRHCEKNYTVIRRSNPVKNSVSQNFFNYFSGLQQCFAPRNDGSSIHATTPKAL) form a unknown insert region. Arg193 serves as a coordination point for substrate. The RPE1 insert domain maps to 286–332 (DLSNNLSYKEEFEGDTERRTAAYINVREDSSTGSTYKLPLEGGYSRG). The active-site Proton acceptor; specific for L-alanine is the Tyr357. Met405 provides a ligand contact to substrate.

Belongs to the alanine racemase family. The cofactor is pyridoxal 5'-phosphate.

It carries out the reaction L-alanine = D-alanine. Its pathway is amino-acid biosynthesis; D-alanine biosynthesis; D-alanine from L-alanine: step 1/1. In terms of biological role, catalyzes the interconversion of L-alanine and D-alanine. May also act on other amino acids. This chain is Alanine racemase (alr), found in Rickettsia felis (strain ATCC VR-1525 / URRWXCal2) (Rickettsia azadi).